The sequence spans 340 residues: Glyceraldehyde-3-phosphate dehydrogenase (340 aa).

NAD(+)-binding positions include 11–12 (TI) and Gly-109. 138 to 140 (SCN) serves as a coordination point for D-glyceraldehyde 3-phosphate. Cys-139 serves as the catalytic Nucleophile. Position 167 (Arg-167) interacts with NAD(+). A D-glyceraldehyde 3-phosphate-binding site is contributed by 193 to 194 (HA). Gln-300 serves as a coordination point for NAD(+).

It belongs to the glyceraldehyde-3-phosphate dehydrogenase family. Homotetramer.

The protein localises to the cytoplasm. The catalysed reaction is D-glyceraldehyde 3-phosphate + phosphate + NADP(+) = (2R)-3-phospho-glyceroyl phosphate + NADPH + H(+). The enzyme catalyses D-glyceraldehyde 3-phosphate + phosphate + NAD(+) = (2R)-3-phospho-glyceroyl phosphate + NADH + H(+). The protein operates within carbohydrate degradation; glycolysis; pyruvate from D-glyceraldehyde 3-phosphate: step 1/5. The protein is Glyceraldehyde-3-phosphate dehydrogenase of Saccharolobus islandicus (strain Y.N.15.51 / Yellowstone #2) (Sulfolobus islandicus).